We begin with the raw amino-acid sequence, 316 residues long: HPr kinase/phosphorylase (316 aa).

Active-site residues include His-143 and Lys-164. Residue 158 to 165 coordinates ATP; sequence GEAGSGKS. Residue Ser-165 participates in Mg(2+) binding. Asp-182 functions as the Proton acceptor; for phosphorylation activity. Proton donor; for dephosphorylation activity in the catalytic mechanism. The tract at residues 206–215 is important for the catalytic mechanism of both phosphorylation and dephosphorylation; that stretch reads LEVRGLGVLN. Glu-207 provides a ligand contact to Mg(2+). The active site involves Arg-251. The segment at 272 to 277 is important for the catalytic mechanism of dephosphorylation; the sequence is PVMPGR.

Belongs to the HPrK/P family. Homohexamer. Mg(2+) serves as cofactor.

It carries out the reaction [HPr protein]-L-serine + ATP = [HPr protein]-O-phospho-L-serine + ADP + H(+). It catalyses the reaction [HPr protein]-O-phospho-L-serine + phosphate + H(+) = [HPr protein]-L-serine + diphosphate. Its function is as follows. Catalyzes the ATP- as well as the pyrophosphate-dependent phosphorylation of a specific serine residue in HPr, a phosphocarrier protein of the phosphoenolpyruvate-dependent sugar phosphotransferase system (PTS). HprK/P also catalyzes the pyrophosphate-producing, inorganic phosphate-dependent dephosphorylation (phosphorolysis) of seryl-phosphorylated HPr (P-Ser-HPr). The polypeptide is HPr kinase/phosphorylase (Xanthomonas euvesicatoria pv. vesicatoria (strain 85-10) (Xanthomonas campestris pv. vesicatoria)).